Consider the following 1136-residue polypeptide: Nuclear pore complex protein Nup133 (1136 aa).

Residues 1-26 (MFSPRGTPGSGRRQAPRTGGRRSVSA) form a disordered region.

This sequence belongs to the nucleoporin Nup133 family. Forms part of the Nup160 subcomplex in the nuclear pore which is composed of NUP160, NUP133, NUP107 and Nup96. This complex plays a role in RNA export and in tethering Nup98 and NUP153 to the nucleus. Widely expressed in the embryo and in adult tissues. Higher expression is observed in the brain, testes, ovary, skin, and kidney.

The protein localises to the nucleus. It localises to the nuclear pore complex. It is found in the chromosome. The protein resides in the centromere. Its subcellular location is the kinetochore. In terms of biological role, involved in poly(A)+ RNA transport. Involved in nephrogenesis. The chain is Nuclear pore complex protein Nup133 from Danio rerio (Zebrafish).